We begin with the raw amino-acid sequence, 491 residues long: Rab5 GDP/GTP exchange factor (491 aa).

The tract at residues Met-1 to Ser-74 is interaction with ubiquitinated proteins. The A20-type zinc-finger motif lies at Asp-13–Arg-47. 4 residues coordinate Zn(2+): Cys-19, Cys-23, Cys-35, and Cys-38. Residues Glu-66–Lys-85 form a disordered region. A compositionally biased stretch (low complexity) spans Phe-69 to Ser-84. 2 positions are modified to phosphoserine: Ser-124 and Ser-132. An N6-acetyllysine mark is found at Lys-151 and Lys-170. Residues Glu-232 to Asn-375 form the VPS9 domain. Phosphoserine is present on residues Ser-373, Ser-377, Ser-390, and Ser-400. The disordered stretch occupies residues Pro-462–Gly-491.

Interacts with RGS14; the interaction is GTP-dependent. Heterodimer with RABEP1. The heterodimer binds RAB4A and RAB5A that have been activated by GTP-binding. Interacts with RAB21, and with 100-fold lower affinity also with RAB22. Binds TSC2, GGA1, GGA2, GGA3, AP1G1 and AP1G2. Interacts with ubiquitinated EGFR. Post-translationally, monoubiquitinated.

The protein localises to the cytoplasm. Its subcellular location is the early endosome. The protein resides in the recycling endosome. Its function is as follows. Rab effector protein acting as linker between gamma-adaptin, RAB4A or RAB5A. Involved in endocytic membrane fusion and membrane trafficking of recycling endosomes. Stimulates nucleotide exchange on RAB5A. Can act as a ubiquitin ligase. In Homo sapiens (Human), this protein is Rab5 GDP/GTP exchange factor (RABGEF1).